A 56-amino-acid chain; its full sequence is Mitoregulin (56 aa).

The Mitochondrial matrix segment spans residues 2–9; that stretch reads ADVSERTL. A helical transmembrane segment spans residues 10 to 27; sequence QVSVLVAFASGVVLGWQA. Residues 28–56 are Mitochondrial intermembrane-facing; that stretch reads NRLRRRYLDWRKRRLQDKLATTQKKLDLA.

It belongs to the mitoregulin family. In terms of assembly, interacts with mitochondrial trifunctional enzyme, a heterotetrameric complex composed of 2 HADHA subunits and 2 HADHB subunits. Interacts with cytochrome b5 reductase CYB5R3; the interaction is required to maintain cellular lipid composition and leads to stimulation of mitochondrial respiratory complex I activity. Interacts with ATP synthase subunit ATP5F1B/ATP5B. In terms of tissue distribution, enriched in heart and skeletal muscle (at protein level). Also enriched in adipose tissue with lower levels detected in liver, pancreas and brain (at protein level). Higher levels in differentiated myotubes than in satellite cells.

Its subcellular location is the mitochondrion inner membrane. Functionally, positively regulates mitochondrial complex assembly and/or stability. Increases mitochondrial membrane potential while decreasing mitochondrial reactive oxygen species. Increases mitochondrial respiration rate. Increased mitochondrial respiratory activity promotes myogenic differentiation which facilitates muscle growth and regeneration. Increases mitochondrial calcium retention capacity. Plays a role in maintenance of cellular lipid composition through its interaction with cytochrome b5 reductase CYB5R3 which is required for mitochondrial respiratory complex I activity. Interacts with the mitochondrial trifunctional enzyme complex (MTE) and enhances fatty acid beta-oxidation. Not required for MTE formation or stability. Modulates triglyceride clearance in adipocytes through its role in regulating fatty acid beta-oxidation and lipolysis. This chain is Mitoregulin, found in Mus musculus (Mouse).